The sequence spans 292 residues: Xyloglucan endotransglucosylase/hydrolase protein A (292 aa).

An N-terminal signal peptide occupies residues 1 to 20 (MGSSLWTCLILLSLASASFA). Residues 21–219 (ANPRTPIDVP…WSKAPFIASY (199 aa)) enclose the GH16 domain. The Nucleophile role is filled by Glu105. Residue Glu109 is the Proton donor of the active site. Glu109 contacts xyloglucan. N-linked (GlcNAc...) asparagine glycosylation occurs at Asn113. Xyloglucan-binding positions include 122–124 (QTN), 132–134 (DRE), 198–199 (DW), and Gly203. Disulfide bonds link Cys227–Cys236 and Cys273–Cys286. Arg278 lines the xyloglucan pocket.

This sequence belongs to the glycosyl hydrolase 16 family. XTH group 1 subfamily. In terms of processing, contains at least one intrachain disulfide bond essential for its enzymatic activity. As to expression, predominantly expressed in the phloem fibers of growing internodes. Expressed in xylem cells in the basal part of the internode. In the internode, it is expressed closer to the top of the internode compared to XTHB.

It is found in the secreted. Its subcellular location is the cell wall. It localises to the extracellular space. The protein resides in the apoplast. The catalysed reaction is breaks a beta-(1-&gt;4) bond in the backbone of a xyloglucan and transfers the xyloglucanyl segment on to O-4 of the non-reducing terminal glucose residue of an acceptor, which can be a xyloglucan or an oligosaccharide of xyloglucan.. Catalyzes xyloglucan endohydrolysis (XEH) and/or endotransglycosylation (XET). Cleaves and religates xyloglucan polymers, an essential constituent of the primary cell wall, and thereby participates in cell wall construction of growing tissues. The chain is Xyloglucan endotransglucosylase/hydrolase protein A (XTHA) from Phaseolus angularis (Azuki bean).